The sequence spans 473 residues: Bifunctional protein HldE (473 aa).

The interval M1–I317 is ribokinase. N195–E198 lines the ATP pocket. The active site involves D264. The tract at residues M343–N473 is cytidylyltransferase.

It in the N-terminal section; belongs to the carbohydrate kinase PfkB family. In the C-terminal section; belongs to the cytidylyltransferase family. Homodimer.

The enzyme catalyses D-glycero-beta-D-manno-heptose 7-phosphate + ATP = D-glycero-beta-D-manno-heptose 1,7-bisphosphate + ADP + H(+). The catalysed reaction is D-glycero-beta-D-manno-heptose 1-phosphate + ATP + H(+) = ADP-D-glycero-beta-D-manno-heptose + diphosphate. It functions in the pathway nucleotide-sugar biosynthesis; ADP-L-glycero-beta-D-manno-heptose biosynthesis; ADP-L-glycero-beta-D-manno-heptose from D-glycero-beta-D-manno-heptose 7-phosphate: step 1/4. The protein operates within nucleotide-sugar biosynthesis; ADP-L-glycero-beta-D-manno-heptose biosynthesis; ADP-L-glycero-beta-D-manno-heptose from D-glycero-beta-D-manno-heptose 7-phosphate: step 3/4. In terms of biological role, catalyzes the phosphorylation of D-glycero-D-manno-heptose 7-phosphate at the C-1 position to selectively form D-glycero-beta-D-manno-heptose-1,7-bisphosphate. Catalyzes the ADP transfer from ATP to D-glycero-beta-D-manno-heptose 1-phosphate, yielding ADP-D-glycero-beta-D-manno-heptose. This Nitrosococcus oceani (strain ATCC 19707 / BCRC 17464 / JCM 30415 / NCIMB 11848 / C-107) protein is Bifunctional protein HldE.